The sequence spans 660 residues: UvrABC system protein B (660 aa).

A Helicase ATP-binding domain is found at glutamate 25 to asparagine 183. Glycine 38–threonine 45 contacts ATP. The short motif at tyrosine 91–valine 114 is the Beta-hairpin element. A Helicase C-terminal domain is found at glutamine 431–leucine 593. One can recognise a UVR domain in the interval alanine 622–threonine 657.

This sequence belongs to the UvrB family. As to quaternary structure, forms a heterotetramer with UvrA during the search for lesions. Interacts with UvrC in an incision complex.

It is found in the cytoplasm. The UvrABC repair system catalyzes the recognition and processing of DNA lesions. A damage recognition complex composed of 2 UvrA and 2 UvrB subunits scans DNA for abnormalities. Upon binding of the UvrA(2)B(2) complex to a putative damaged site, the DNA wraps around one UvrB monomer. DNA wrap is dependent on ATP binding by UvrB and probably causes local melting of the DNA helix, facilitating insertion of UvrB beta-hairpin between the DNA strands. Then UvrB probes one DNA strand for the presence of a lesion. If a lesion is found the UvrA subunits dissociate and the UvrB-DNA preincision complex is formed. This complex is subsequently bound by UvrC and the second UvrB is released. If no lesion is found, the DNA wraps around the other UvrB subunit that will check the other stand for damage. The protein is UvrABC system protein B of Methanococcoides burtonii (strain DSM 6242 / NBRC 107633 / OCM 468 / ACE-M).